A 134-amino-acid polypeptide reads, in one-letter code: Cytochrome b5 isoform E (134 aa).

In terms of domain architecture, Cytochrome b5 heme-binding spans 5–81 (RKVLSFEEVS…MDKYFIGEID (77 aa)). 2 residues coordinate heme: His-40 and His-64. A helical membrane pass occupies residues 107–127 (FIIKILQFLVPILILGLALVV). An AKR2A-binding sequence (ABS) required for endoplasmic reticulum membrane targeting motif is present at residues 128–134 (RHYTKKD).

This sequence belongs to the cytochrome b5 family. In terms of assembly, interacts with CER1, BI-1, FAH1 and FAH2. Interacts with AKR2A. As to expression, expressed in roots, stems, leaves, flowers and siliques.

The protein resides in the cell membrane. It is found in the endoplasmic reticulum membrane. Its function is as follows. Membrane bound hemoprotein which function as an electron carrier for several membrane bound oxygenases, including fatty acid desaturases. This Arabidopsis thaliana (Mouse-ear cress) protein is Cytochrome b5 isoform E (CYTB5-E).